We begin with the raw amino-acid sequence, 483 residues long: Glutamate mutase epsilon subunit (483 aa).

Arginine 66 serves as a coordination point for L-glutamate. Glycine 68 is an adenosylcob(III)alamin binding site. Arginine 100 is an L-glutamate binding site. An adenosylcob(III)alamin-binding site is contributed by asparagine 123. Residues arginine 149–histidine 150, glutamate 171, and tyrosine 177 each bind L-glutamate. Position 180 (proline 180) interacts with adenosylcob(III)alamin. L-glutamate is bound at residue tyrosine 181. Residues phenylalanine 297, lysine 326, glutamate 330, and isoleucine 334 each coordinate adenosylcob(III)alamin.

It belongs to the methylaspartate mutase GlmE subunit family. In terms of assembly, heterotetramer composed of 2 epsilon subunits (GlmE) and 2 sigma subunits (GlmS). GlmE exists as a homodimer and GlmS as a monomer. The cofactor is adenosylcob(III)alamin.

The catalysed reaction is (2S,3S)-3-methyl-L-aspartate = L-glutamate. Its pathway is amino-acid degradation; L-glutamate degradation via mesaconate pathway; acetate and pyruvate from L-glutamate: step 1/4. Competitively inhibited by (2S,4S)-4-fluoroglutamate, 2-methyleneglutarate, (2R,3RS)-3-fluoroglutamate and (S)-3-methylitaconate. Functionally, catalyzes the carbon skeleton rearrangement of L-glutamate to L-threo-3-methylaspartate ((2S,3S)-3-methylaspartate). This is Glutamate mutase epsilon subunit from Clostridium cochlearium.